A 926-amino-acid chain; its full sequence is Storkhead-box protein 2 (926 aa).

Disordered stretches follow at residues Met-1–Lys-32, Glu-338–Gly-393, Glu-452–Asp-529, Lys-564–Gly-586, Val-633–Lys-693, Leu-723–Met-802, and Thr-823–Val-926. The span at Phe-18–Lys-32 shows a compositional bias: basic and acidic residues. A compositionally biased stretch (basic residues) spans His-353 to Val-378. Positions Ser-379–Gly-393 are enriched in basic and acidic residues. The span at Ser-463–Ser-472 shows a compositional bias: basic residues. The segment covering His-473–Asp-495 has biased composition (basic and acidic residues). The segment covering Gln-518–Asp-529 has biased composition (polar residues). Basic and acidic residues-rich tracts occupy residues Val-633–Pro-658 and His-684–Lys-693. A compositionally biased stretch (polar residues) spans Leu-746–Ala-769. Residues Gly-785–Val-799 are compositionally biased toward basic and acidic residues. Polar residues-rich tracts occupy residues Met-847–Ala-884 and Lys-914–Val-926.

The protein is Storkhead-box protein 2 (Stox2) of Mus musculus (Mouse).